Reading from the N-terminus, the 456-residue chain is Ezy-1 protein (456 aa).

The N-terminal stretch at 1–28 (MQLSSSLRSARSAAASSGCALASRPVVA) is a signal peptide. Disordered stretches follow at residues 167–189 (SDGG…DGDG), 273–310 (FTGK…GGSG), and 414–456 (QPAG…SPNM). The span at 281 to 293 (AEGDDGEDEEEGE) shows a compositional bias: acidic residues. Residues 418–428 (DGHEPEPKRPE) are compositionally biased toward basic and acidic residues.

This Chlamydomonas reinhardtii (Chlamydomonas smithii) protein is Ezy-1 protein (Ezy-1).